The chain runs to 374 residues: Copper-containing nitrite reductase (374 aa).

A signal peptide (tat-type signal) is located at residues 1 to 31 (MFTRRAALVGAAALASAPLVIRTAGAEEAPA). Plastocyanin-like domains lie at 93-189 (MTFD…IMVL) and 254-355 (GAVG…VLVE). The Cu cation site is built by His126, His131, His166, Cys167, His177, Met182, and His338.

It belongs to the multicopper oxidase family. In terms of assembly, homotrimer. Requires Cu(2+) as cofactor. Cu(+) serves as cofactor. FAD is required as a cofactor. Post-translationally, predicted to be exported by the Tat system. The position of the signal peptide cleavage has not been experimentally proven.

Its subcellular location is the periplasm. The enzyme catalyses nitric oxide + Fe(III)-[cytochrome c] + H2O = Fe(II)-[cytochrome c] + nitrite + 2 H(+). It participates in nitrogen metabolism; nitrate reduction (denitrification); dinitrogen from nitrate: step 2/4. This is Copper-containing nitrite reductase (nirK) from Cereibacter sphaeroides (strain ATCC 17025 / ATH 2.4.3) (Rhodobacter sphaeroides).